Here is a 199-residue protein sequence, read N- to C-terminus: Pyridoxal 5'-phosphate synthase subunit PdxT (199 aa).

An L-glutamine-binding site is contributed by 49–51 (GES). The active-site Nucleophile is C81. L-glutamine contacts are provided by residues R110 and 139-140 (IR). Residues H175 and E177 each act as charge relay system in the active site.

Belongs to the glutaminase PdxT/SNO family. In terms of assembly, in the presence of PdxS, forms a dodecamer of heterodimers. Only shows activity in the heterodimer.

The catalysed reaction is aldehydo-D-ribose 5-phosphate + D-glyceraldehyde 3-phosphate + L-glutamine = pyridoxal 5'-phosphate + L-glutamate + phosphate + 3 H2O + H(+). It catalyses the reaction L-glutamine + H2O = L-glutamate + NH4(+). It participates in cofactor biosynthesis; pyridoxal 5'-phosphate biosynthesis. Functionally, catalyzes the hydrolysis of glutamine to glutamate and ammonia as part of the biosynthesis of pyridoxal 5'-phosphate. The resulting ammonia molecule is channeled to the active site of PdxS. The chain is Pyridoxal 5'-phosphate synthase subunit PdxT from Frankia casuarinae (strain DSM 45818 / CECT 9043 / HFP020203 / CcI3).